Consider the following 101-residue polypeptide: Large ribosomal subunit protein eL30 (101 aa).

This sequence belongs to the eukaryotic ribosomal protein eL30 family.

This is Large ribosomal subunit protein eL30 (rpl30e) from Thermococcus celer.